The chain runs to 159 residues: Endoribonuclease YbeY (159 aa).

Residues histidine 120, histidine 124, and histidine 130 each contribute to the Zn(2+) site.

This sequence belongs to the endoribonuclease YbeY family. Zn(2+) is required as a cofactor.

It is found in the cytoplasm. Its function is as follows. Single strand-specific metallo-endoribonuclease involved in late-stage 70S ribosome quality control and in maturation of the 3' terminus of the 16S rRNA. This chain is Endoribonuclease YbeY, found in Parafrankia sp. (strain EAN1pec).